The following is a 328-amino-acid chain: DNA polymerase III subunit delta' (328 aa).

As to quaternary structure, DNA polymerase III contains a core (composed of alpha, epsilon and theta chains) that associates with a tau subunit. This core dimerizes to form the POLIII' complex. PolIII' associates with the gamma complex (composed of gamma, delta, delta', psi and chi chains) and with the beta chain to form the complete DNA polymerase III complex.

It catalyses the reaction DNA(n) + a 2'-deoxyribonucleoside 5'-triphosphate = DNA(n+1) + diphosphate. Its function is as follows. DNA polymerase III is a complex, multichain enzyme responsible for most of the replicative synthesis in bacteria. This DNA polymerase also exhibits 3' to 5' exonuclease activity. This Buchnera aphidicola subsp. Schizaphis graminum (strain Sg) protein is DNA polymerase III subunit delta' (holB).